The following is a 175-amino-acid chain: Shikimate kinase (175 aa).

Residue 12–17 (GAGKTT) coordinates ATP. Thr-16 contributes to the Mg(2+) binding site. Residues Asp-34, Arg-58, and Gly-80 each coordinate substrate. Arg-117 serves as a coordination point for ATP. Position 136 (Arg-136) interacts with substrate.

This sequence belongs to the shikimate kinase family. In terms of assembly, monomer. Mg(2+) is required as a cofactor.

The protein localises to the cytoplasm. It catalyses the reaction shikimate + ATP = 3-phosphoshikimate + ADP + H(+). It participates in metabolic intermediate biosynthesis; chorismate biosynthesis; chorismate from D-erythrose 4-phosphate and phosphoenolpyruvate: step 5/7. Catalyzes the specific phosphorylation of the 3-hydroxyl group of shikimic acid using ATP as a cosubstrate. The chain is Shikimate kinase from Saccharopolyspora erythraea (strain ATCC 11635 / DSM 40517 / JCM 4748 / NBRC 13426 / NCIMB 8594 / NRRL 2338).